We begin with the raw amino-acid sequence, 243 residues long: Peptidyl-tRNA hydrolase (243 aa).

Residue Y14 coordinates tRNA. Residue H19 is the Proton acceptor of the active site. The tRNA site is built by F64, N66, and N112. The interval A184–G225 is disordered. Over residues P189 to A206 the composition is skewed to basic and acidic residues.

Belongs to the PTH family. As to quaternary structure, monomer.

The protein localises to the cytoplasm. The enzyme catalyses an N-acyl-L-alpha-aminoacyl-tRNA + H2O = an N-acyl-L-amino acid + a tRNA + H(+). Its function is as follows. Hydrolyzes ribosome-free peptidyl-tRNAs (with 1 or more amino acids incorporated), which drop off the ribosome during protein synthesis, or as a result of ribosome stalling. Functionally, catalyzes the release of premature peptidyl moieties from peptidyl-tRNA molecules trapped in stalled 50S ribosomal subunits, and thus maintains levels of free tRNAs and 50S ribosomes. The sequence is that of Peptidyl-tRNA hydrolase from Rhodospirillum rubrum (strain ATCC 11170 / ATH 1.1.1 / DSM 467 / LMG 4362 / NCIMB 8255 / S1).